Consider the following 378-residue polypeptide: Zinc transporter 7 (378 aa).

Over 1-37 (MLPLSIKDDEYKPPKFNLFGKISGWFRSILSDKTSRN) the chain is Cytoplasmic. Residues 38–58 (LFFFLCLNLSFAFVELLYGIW) form a helical membrane-spanning segment. The Lumenal segment spans residues 59–67 (SNCLGLISD). Residues 68-88 (SFHMFFDSTAILAGLAASVIS) form a helical membrane-spanning segment. The Cytoplasmic portion of the chain corresponds to 89-102 (KWRDNDAFSYGYVR). The chain crosses the membrane as a helical span at residues 103-123 (AEVLAGFVNGLFLIFTAFFIF). At 124-140 (SEGVERALAPPDVHHER) the chain is on the lumenal side. The helical transmembrane segment at 141–161 (LLLVSILGFVVNLVGIFVFNH) threads the bilayer. The his-rich loop stretch occupies residues 161–220 (HGGHGHSHGSGHGHSHSLFNGALDHSHGHEDHCHSHEAKHGAAHSHDHDHAHGHGHLHSH). Topologically, residues 162–238 (GGHGHSHGSG…AGPSRQILQG (77 aa)) are cytoplasmic. The span at 186–223 (SHGHEDHCHSHEAKHGAAHSHDHDHAHGHGHLHSHDGP) shows a compositional bias: basic and acidic residues. Positions 186 to 224 (SHGHEDHCHSHEAKHGAAHSHDHDHAHGHGHLHSHDGPS) are disordered. Residues 239–259 (VFLHILADTLGSIGVIASAIM) form a helical membrane-spanning segment. Residues 260–264 (MQNFG) are Lumenal-facing. Residues 265–285 (LMIADPICSILIAILIVVSVI) traverse the membrane as a helical segment. Over 286–378 (PLLRESVGIL…LYVQIDFAAM (93 aa)) the chain is Cytoplasmic.

The protein belongs to the cation diffusion facilitator (CDF) transporter (TC 2.A.4) family. SLC30A subfamily. As to quaternary structure, homooligomer. Highly expressed in liver, spleen, duodenum and part of the jejunum of small intestine (at protein level). Moderately expressed in kidney, lung, and brain. Barely detectable in heart. In brain, expressed in cerebellum, cerebral cortex and hippocampus (at protein level).

The protein resides in the golgi apparatus membrane. It is found in the cytoplasmic vesicle. It localises to the golgi apparatus. The protein localises to the trans-Golgi network. Its subcellular location is the sarcoplasmic reticulum. The protein resides in the mitochondrion. It carries out the reaction Zn(2+)(in) = Zn(2+)(out). In terms of biological role, zinc ion transporter mediating zinc entry from the cytosol into the lumen of organelles along the secretory pathway. By contributing to zinc ion homeostasis within the early secretory pathway, regulates the activation and folding of enzymes like alkaline phosphatases. The protein is Zinc transporter 7 of Mus musculus (Mouse).